We begin with the raw amino-acid sequence, 105 residues long: MIDIIVKEDKRLITVQTPEGDEVFYTLSFSDEHKLLKRSSARLRNNIYAIGVANIRWVLVDMDNMILSEYMHHVDILKDIDRKMRQLGYIVISEWQHANKKGTRR.

Belongs to the phi29likevirus gp16.8 family.

The polypeptide is Gene product 16.8 (16.8) (Bacillus subtilis (Bacteriophage PZA)).